Reading from the N-terminus, the 64-residue chain is UPF0337 protein SAR0874 (64 aa).

The disordered stretch occupies residues 1–40 (MADESKFEQAKGNVKETVGNVTDNKNLENEGKEDKASGKA). A compositionally biased stretch (basic and acidic residues) spans 25 to 40 (KNLENEGKEDKASGKA).

It belongs to the UPF0337 (CsbD) family.

In Staphylococcus aureus (strain MRSA252), this protein is UPF0337 protein SAR0874.